The primary structure comprises 149 residues: MSTNICSFKDRCVSILCCKFCKQVLSSRGMKAVLLADTEIDLFSTDIPPTNAVDFTGRCYFTKICKCKLKDIACLKCGNIVVYHVIVPCSSCLLSCNNRHFWMFHSQAVYDINRLDSTGVNVLLRGNLPEIEESTDEDVLNISAEECIR.

It belongs to the FAM72 family.

In Homo sapiens (Human), this protein is Protein FAM72C (FAM72C).